Reading from the N-terminus, the 195-residue chain is MNIHAVVIVLSYLIGSIPFGLILSYIGGLGDIRKVGSGNIGATNVFRKSKKLAVMTLLLDAVKGLISVLLAKIYSTDQTFAFISAMFSIIGHMFPVWLLFKGGKGISTLLGSMVLIEYKFVICFLFIWITLFAIFKYSSLSSIVSTIFVALLVYMYYTMNDTAVFIAMSLLIITQHADNIARMLSGKENKLNIGL.

The next 5 helical transmembrane spans lie at I3–L23, A53–I73, F80–F100, L115–F135, and I147–A167.

This sequence belongs to the PlsY family. Probably interacts with PlsX.

The protein resides in the cell inner membrane. It carries out the reaction an acyl phosphate + sn-glycerol 3-phosphate = a 1-acyl-sn-glycero-3-phosphate + phosphate. It participates in lipid metabolism; phospholipid metabolism. Catalyzes the transfer of an acyl group from acyl-phosphate (acyl-PO(4)) to glycerol-3-phosphate (G3P) to form lysophosphatidic acid (LPA). This enzyme utilizes acyl-phosphate as fatty acyl donor, but not acyl-CoA or acyl-ACP. The sequence is that of Glycerol-3-phosphate acyltransferase from Ehrlichia chaffeensis (strain ATCC CRL-10679 / Arkansas).